A 424-amino-acid chain; its full sequence is Neurotensin receptor type 1 (424 aa).

The disordered stretch occupies residues 1-23 (MHLNSSVPQGTPGEPDAQPFSGP). At 1–68 (MHLNSSVPQG…TDIYSKVLVT (68 aa)) the chain is on the extracellular side. 3 N-linked (GlcNAc...) asparagine glycosylation sites follow: N4, N38, and N42. Residues 69-89 (AIYLALFVVGTVGNSVTAFTL) traverse the membrane as a helical segment. The Cytoplasmic portion of the chain corresponds to 90–103 (ARKKSLQSLQSTVH). The helical transmembrane segment at 104–123 (YHLGSLALSDLLILLLAMPV) threads the bilayer. Residues 124–143 (ELYNFIWVHHPWAFGDAGCR) are Extracellular-facing. A disulfide bridge connects residues C142 and C225. Residues 144 to 165 (GYYFLRDACTYATALNVASLSV) form a helical membrane-spanning segment. The Cytoplasmic segment spans residues 166–185 (ERYLAICHPFKAKTLMSRSR). The helical transmembrane segment at 186–206 (TKKFISAIWLASALLAIPMLF) threads the bilayer. The Extracellular portion of the chain corresponds to 207–235 (TMGLQNRSGDGTHPGGLVCTPIVDTATVK). Residues 236 to 260 (VVIQVNTFMSFLFPMLVISILNTVI) form a helical membrane-spanning segment. Topologically, residues 261-308 (ANKLTVMVHQAAEQGRVCTVGTHNGLEHSTFNMTIEPGRVQALRHGVL) are cytoplasmic. The helical transmembrane segment at 309-330 (VLRAVVIAFVVCWLPYHVRRLM) threads the bilayer. Residues 326-349 (VRRLMFCYISDEQWTTFLFDFYHY) form a neurotensin binding region. Residues 331–348 (FCYISDEQWTTFLFDFYH) lie on the Extracellular side of the membrane. A helical membrane pass occupies residues 349-369 (YFYMLTNALFYVSSAINPILY). Topologically, residues 370–424 (NLVSANFRQVFLSTLACLCPGWRHRRKKRPTFSRKPNSMSSNHAFSTSATRETLY) are cytoplasmic. S-palmitoyl cysteine attachment occurs at residues C386 and C388. The tract at residues 397–424 (KRPTFSRKPNSMSSNHAFSTSATRETLY) is disordered. Residues 403-424 (RKPNSMSSNHAFSTSATRETLY) are compositionally biased toward polar residues.

This sequence belongs to the G-protein coupled receptor 1 family. Neurotensin receptor subfamily. NTSR1 sub-subfamily. As to quaternary structure, interacts (palmitoylated form) with GNA11. N-glycosylated. Post-translationally, palmitoylated; this is required for normal localization at membrane rafts and normal GNA11-mediated activation of down-stream signaling cascades. The palmitoylation level increases in response to neurotensin treatment. As to expression, detected in brain and small intestine.

It is found in the cell membrane. The protein localises to the membrane raft. Functionally, G-protein coupled receptor for the tridecapeptide neurotensin (NTS). Signaling is effected via G proteins that activate a phosphatidylinositol-calcium second messenger system. Signaling leads to the activation of downstream MAP kinases and protects cells against apoptosis. The sequence is that of Neurotensin receptor type 1 (Ntsr1) from Rattus norvegicus (Rat).